The primary structure comprises 126 residues: Large ribosomal subunit protein bL17 (126 aa).

Belongs to the bacterial ribosomal protein bL17 family. Part of the 50S ribosomal subunit. Contacts protein L32.

The chain is Large ribosomal subunit protein bL17 from Coxiella burnetii (strain CbuK_Q154) (Coxiella burnetii (strain Q154)).